Consider the following 679-residue polypeptide: Methionine--tRNA ligase (679 aa).

A 'HIGH' region motif is present at residues Pro-14–His-24. Zn(2+)-binding residues include Cys-145, Cys-148, Cys-158, and Cys-161. Positions Lys-331–Ser-335 match the 'KMSKS' region motif. Lys-334 is an ATP binding site. One can recognise a tRNA-binding domain in the interval Thr-577–Lys-679.

The protein belongs to the class-I aminoacyl-tRNA synthetase family. MetG type 1 subfamily. As to quaternary structure, homodimer. Zn(2+) serves as cofactor.

It localises to the cytoplasm. It carries out the reaction tRNA(Met) + L-methionine + ATP = L-methionyl-tRNA(Met) + AMP + diphosphate. Is required not only for elongation of protein synthesis but also for the initiation of all mRNA translation through initiator tRNA(fMet) aminoacylation. The polypeptide is Methionine--tRNA ligase (Pseudomonas putida (strain ATCC 47054 / DSM 6125 / CFBP 8728 / NCIMB 11950 / KT2440)).